We begin with the raw amino-acid sequence, 186 residues long: Protein GrpE (186 aa).

It belongs to the GrpE family. As to quaternary structure, homodimer.

It localises to the cytoplasm. In terms of biological role, participates actively in the response to hyperosmotic and heat shock by preventing the aggregation of stress-denatured proteins, in association with DnaK and GrpE. It is the nucleotide exchange factor for DnaK and may function as a thermosensor. Unfolded proteins bind initially to DnaJ; upon interaction with the DnaJ-bound protein, DnaK hydrolyzes its bound ATP, resulting in the formation of a stable complex. GrpE releases ADP from DnaK; ATP binding to DnaK triggers the release of the substrate protein, thus completing the reaction cycle. Several rounds of ATP-dependent interactions between DnaJ, DnaK and GrpE are required for fully efficient folding. The polypeptide is Protein GrpE (Novosphingobium aromaticivorans (strain ATCC 700278 / DSM 12444 / CCUG 56034 / CIP 105152 / NBRC 16084 / F199)).